The chain runs to 396 residues: Carbamoyl phosphate synthase small chain (396 aa).

The interval 1 to 204 (MTQHDNDPAW…WDKGFGQQDK (204 aa)) is CPSase. Residues Ser-59, Gly-256, and Gly-258 each contribute to the L-glutamine site. Residues 208-396 (NVVAIDYGIK…AELMRQKKSA (189 aa)) form the Glutamine amidotransferase type-1 domain. Cys-285 serves as the catalytic Nucleophile. 5 residues coordinate L-glutamine: Leu-286, Gln-289, Asn-327, Gly-329, and Phe-330. Catalysis depends on residues His-369 and Glu-371.

This sequence belongs to the CarA family. In terms of assembly, composed of two chains; the small (or glutamine) chain promotes the hydrolysis of glutamine to ammonia, which is used by the large (or ammonia) chain to synthesize carbamoyl phosphate. Tetramer of heterodimers (alpha,beta)4.

The catalysed reaction is hydrogencarbonate + L-glutamine + 2 ATP + H2O = carbamoyl phosphate + L-glutamate + 2 ADP + phosphate + 2 H(+). The enzyme catalyses L-glutamine + H2O = L-glutamate + NH4(+). Its pathway is amino-acid biosynthesis; L-arginine biosynthesis; carbamoyl phosphate from bicarbonate: step 1/1. It participates in pyrimidine metabolism; UMP biosynthesis via de novo pathway; (S)-dihydroorotate from bicarbonate: step 1/3. Functionally, small subunit of the glutamine-dependent carbamoyl phosphate synthetase (CPSase). CPSase catalyzes the formation of carbamoyl phosphate from the ammonia moiety of glutamine, carbonate, and phosphate donated by ATP, constituting the first step of 2 biosynthetic pathways, one leading to arginine and/or urea and the other to pyrimidine nucleotides. The small subunit (glutamine amidotransferase) binds and cleaves glutamine to supply the large subunit with the substrate ammonia. This is Carbamoyl phosphate synthase small chain from Bradyrhizobium diazoefficiens (strain JCM 10833 / BCRC 13528 / IAM 13628 / NBRC 14792 / USDA 110).